A 161-amino-acid chain; its full sequence is Allophycocyanin alpha chain 2 (161 aa).

Asparagine 71 is modified (N4-methylasparagine). Cysteine 81 is a (2R,3E)-phycocyanobilin binding site.

This sequence belongs to the phycobiliprotein family. In terms of assembly, component of the phycobilisome. Heterodimer of an alpha and a beta chain. In terms of processing, contains one covalently linked bilin chromophore.

The protein resides in the cellular thylakoid membrane. Its function is as follows. Light-harvesting photosynthetic bile pigment-protein from the phycobiliprotein complex. Allophycocyanin has a maximum absorption at approximately 650 nanometers. The sequence is that of Allophycocyanin alpha chain 2 (apcA2) from Microchaete diplosiphon (Fremyella diplosiphon).